A 343-amino-acid polypeptide reads, in one-letter code: 2-alkenal reductase (NADP(+)-dependent) (343 aa).

The substrate site is built by Tyr-55 and Tyr-80. NADP(+)-binding positions include Ala-165 to Val-166, Gly-186, Lys-190, Tyr-206, Asn-230, Cys-252, Tyr-258, Phe-282 to Val-284, and Asn-332.

This sequence belongs to the NADP-dependent oxidoreductase L4BD family. Homodimer.

The catalysed reaction is an n-alkanal + NADP(+) = an alk-2-enal + NADPH + H(+). Its function is as follows. Reduces the C=C double bonds of alpha, beta unsaturated enones, but has no activity on enones with an endocyclic C=C double-bond. Shows a high specificity for NADPH as the hybrid donor. Substrates are 1-nitrocyclohexene, 2-methylpentenal, trans-cinnamaldehyde, methyl-trans-2-methylcinnamaldehyde, trans-2-nonenal and 1-octen-3-one. Reduced activity with aplha-methyl transcinnamaldehyde, 1-cyclohexene-1-carboxaldehyde, methyl crotonate, (R)-pulegone, and dimethyl itaconate and no activity with maleimides, citral, (5R)- or (5S)-carvone, (S)-perillyl alcohol, and substituted cyclohexenones and cyclopentenones. May also act as a allyl-alcohol dehydrogenase by catalyzing the dehydrogenation of secondary allylic alcohols rather than saturated secondary alcohols. Allyl-alcohol dehydrogenase is specific for the S-stereoisomer of the alcohols. The protein is 2-alkenal reductase (NADP(+)-dependent) (DBR) of Nicotiana tabacum (Common tobacco).